The following is a 518-amino-acid chain: Two-component response regulator-like PRR1 (518 aa).

In terms of domain architecture, Response regulatory spans 29-147; the sequence is RILLCDSDPS…ELLNLWTHVW (119 aa). Disordered stretches follow at residues 172-241, 266-305, and 483-518; these read PSDA…PGVM, TPTT…GTDV, and VRQA…SSPE. Over residues 196–212 the composition is skewed to polar residues; sequence NQETSTSNQHEYESNPS. The region spanning 443-485 is the CCT domain; sequence RAAALAKFRLKRKERCFDKKVRYVNRKKLAETRPRVRGQFVRQ.

It belongs to the ARR-like family. Interacts with PIL13. Interacts with PIL15.

Its subcellular location is the nucleus. In terms of biological role, controls photoperiodic flowering response. Seems to be one of the component of the circadian clock. Expression of several members of the ARR-like family is controlled by circadian rhythm. The particular coordinated sequential expression of PRR73, PRR37, PRR95, PRR59 and PPR1 result to circadian waves that may be at the basis of the endogenous circadian clock. This chain is Two-component response regulator-like PRR1 (PRR1), found in Oryza sativa subsp. japonica (Rice).